We begin with the raw amino-acid sequence, 489 residues long: Cytochrome P450 monooxygenase tazI (489 aa).

Cysteine 433 provides a ligand contact to heme.

This sequence belongs to the cytochrome P450 family. Heme is required as a cofactor.

It participates in secondary metabolite biosynthesis. Cytochrome P450 monooxygenase; part of the gene cluster that mediates the biosynthesis of azaterrilone A and other azaphilones, a class of fungal metabolites characterized by a highly oxygenated pyrano-quinone bicyclic core and exhibiting a broad range of bioactivities. The first step of the pathway begins with the non-reducing polyketide synthase tazA that assembles one acetyl-CoA starter unit, five malonyl-CoA units, and catalyzes a series of Claisen condensations, methylation, PT-mediated cyclization, and finally releases the first hexaketide precursor through the R-domain. The tazA product then undergoes reduction on its terminal ketone and the following pyran-ring formation by yet undetermined enzyme(s). Dehydration and enoyl reduction, possibly involving the trans-enoyl reductase tazE leads to the next intermediate. TazD is predicted as an acetyltransferase and might catalyze the acetylation steps leading to the synthesis of azaterrilone A. Azaterrilone A is not the final product of the taz pathway and both the highly reducing polyketide synthase tazB and the dual enzyme tazHJ catalyze late steps of the pathway, leading to the production of the 2 final stereoisomers that contain additional polyketide modification whose structures have still to be determined. In Aspergillus terreus (strain NIH 2624 / FGSC A1156), this protein is Cytochrome P450 monooxygenase tazI.